The following is a 130-amino-acid chain: L-ectoine synthase (130 aa).

It belongs to the ectoine synthase family.

The enzyme catalyses (2S)-4-acetamido-2-aminobutanoate = L-ectoine + H2O. The protein operates within amine and polyamine biosynthesis; ectoine biosynthesis; L-ectoine from L-aspartate 4-semialdehyde: step 3/3. Its function is as follows. Catalyzes the circularization of gamma-N-acetyl-alpha,gamma-diaminobutyric acid (ADABA) to ectoine (1,4,5,6-tetrahydro-2-methyl-4-pyrimidine carboxylic acid), which is an excellent osmoprotectant. This Desulfatibacillum aliphaticivorans protein is L-ectoine synthase.